A 167-amino-acid polypeptide reads, in one-letter code: Zymogen granule membrane protein 16 (167 aa).

The signal sequence occupies residues methionine 1–alanine 16. Residues serine 24–threonine 159 enclose the Jacalin-type lectin domain.

It belongs to the jacalin lectin family. Expressed in pancreas, colon, duodenum, and much less in stomach.

The protein localises to the secreted. Its subcellular location is the extracellular space. It localises to the extracellular matrix. The protein resides in the zymogen granule lumen. It is found in the golgi apparatus lumen. In terms of biological role, may play a role in protein trafficking. May act as a linker molecule between the submembranous matrix on the luminal side of zymogen granule membrane (ZGM) and aggregated secretory proteins during granule formation in the TGN. The sequence is that of Zymogen granule membrane protein 16 (Zg16) from Rattus norvegicus (Rat).